Reading from the N-terminus, the 848-residue chain is MNSSSANITYASRKRRKPVQKTVKPIPAEGIKSNPSKRHRDRLNTELDRLASLLPFPQDVINKLDKLSVLRLSVSYLRAKSFFDVALKSSPTERNGGQDNCRAANFREGLNLQEGEFLLQALNGFVLVVTTDALVFYASSTIQDYLGFQQSDVIHQSVYELIHTEDRAEFQRQLHWALNPSQCTESGQGIEEATGLPQTVVCYNPDQIPPENSPLMERCFICRLRCLLDNSSGFLAMNFQGKLKYLHGQKKKGKDGSILPPQLALFAIATPLQPPSILEIRTKNFIFRTKHKLDFTPIGCDAKGRIVLGYTEAELCTRGSGYQFIHAADMLYCAESHIRMIKTGESGMIVFRLLTKNNRWTWVQSNARLLYKNGRPDYIIVTQRPLTDEEGTEHLRKRNTKLPFMFTTGEAVLYEATNPFPAIMDPLPLRTKNGTSGKDSATTSTLSKDSLNPSSLLAAMMQQDESIYLYPASSTSSTAPFENNFFNESMNECRNWQDNTAPMGNDTILKHEQIDQPQDVNSFAGGHPGLFQDSKNSDLYSIMKNLGIDFEDIRHMQNEKFFRNDFSGEVDFRDIDLTDEILTYVQDSLSKSPFIPSDYQQQQSLALNSSCMVQEHLHLEQQQQHHQKQVVVEPQQQLCQKMKHMQVNGMFENWNSNQFVPFNCPQQDPQQYNVFTDLHGISQEFPYKSEMDSMPYTQNFISCNQPVLPQHSKCTELDYPMGSFEPSPYPTTSSLEDFVTCLQLPENQKHGLNPQSAIITPQTCYAGAVSMYQCQPEPQHTHVGQMQYNPVLPGQQAFLNKFQNGVLNETYPAELNNINNTQTTTHLQPLHHPSEARPFPDLTSSGFL.

Met1 carries the post-translational modification N-acetylmethionine. Positions 1 to 10 (MNSSSANITY) are excised as a propeptide. Positions 1–10 (MNSSSANITY) are enriched in polar residues. Residues 1-39 (MNSSSANITYASRKRRKPVQKTVKPIPAEGIKSNPSKRH) are disordered. 2 consecutive short sequence motifs (nuclear localization signal) follow at residues 13–16 (RKRR) and 37–42 (KRHRDR). A bHLH domain is found at 27 to 80 (PAEGIKSNPSKRHRDRLNTELDRLASLLPFPQDVINKLDKLSVLRLSVSYLRAK). The tract at residues 38–66 (RHRDRLNTELDRLASLLPFPQDVINKLDK) is DNA-binding. Required for maintaining the overall integrity of the AHR:ARNT heterodimer and its transcriptional activity regions lie at residues 50–82 (LASL…AKSF), 118–126 (LLQALNGFV), and 266–268 (FAI). The Nuclear export signal motif lies at 64–72 (LDKLSVLRL). Residues 111–181 (NLQEGEFLLQ…RQLHWALNPS (71 aa)) form the PAS 1 domain. Residues 275–342 (PSILEIRTKN…CAESHIRMIK (68 aa)) form the PAS 2 domain. A PAC domain is found at 348–386 (MIVFRLLTKNNRWTWVQSNARLLYKNGRPDYIIVTQRPL). A disordered region spans residues 824 to 848 (TTHLQPLHHPSEARPFPDLTSSGFL).

As to quaternary structure, homodimer. Heterodimer; efficient DNA binding requires dimerization with another bHLH protein. Interacts with ARNT; the heterodimer ARNT:AHR binds to core DNA sequence 5'-TGCGTG-3' within the dioxin response element (DRE) of target gene promoters and activates their transcription. Binds MYBBP1A. Interacts with coactivators including SRC-1, RIP140 and NOCA7, and with the corepressor SMRT. Interacts with NEDD8 and IVNS1ABP. Interacts with BMAL1. Interacts with HSP90AB1. Interacts with TIPARP; leading to mono-ADP-ribosylation of AHR and subsequent inhibition of AHR. Post-translationally, mono-ADP-ribosylated, leading to inhibit transcription activator activity of AHR. In terms of tissue distribution, expressed in all tissues tested including blood, brain, heart, kidney, liver, lung, pancreas and skeletal muscle. Expressed in retinal photoreceptors.

The protein localises to the cytoplasm. It is found in the nucleus. Ligand-activated transcription factor that enables cells to adapt to changing conditions by sensing compounds from the environment, diet, microbiome and cellular metabolism, and which plays important roles in development, immunity and cancer. Upon ligand binding, translocates into the nucleus, where it heterodimerizes with ARNT and induces transcription by binding to xenobiotic response elements (XRE). Regulates a variety of biological processes, including angiogenesis, hematopoiesis, drug and lipid metabolism, cell motility and immune modulation. Xenobiotics can act as ligands: upon xenobiotic-binding, activates the expression of multiple phase I and II xenobiotic chemical metabolizing enzyme genes (such as the CYP1A1 gene). Mediates biochemical and toxic effects of halogenated aromatic hydrocarbons. Next to xenobiotics, natural ligands derived from plants, microbiota, and endogenous metabolism are potent AHR agonists. Tryptophan (Trp) derivatives constitute an important class of endogenous AHR ligands. Acts as a negative regulator of anti-tumor immunity: indoles and kynurenic acid generated by Trp catabolism act as ligand and activate AHR, thereby promoting AHR-driven cancer cell motility and suppressing adaptive immunity. Regulates the circadian clock by inhibiting the basal and circadian expression of the core circadian component PER1. Inhibits PER1 by repressing the CLOCK-BMAL1 heterodimer mediated transcriptional activation of PER1. The heterodimer ARNT:AHR binds to core DNA sequence 5'-TGCGTG-3' within the dioxin response element (DRE) of target gene promoters and activates their transcription. The protein is Aryl hydrocarbon receptor of Homo sapiens (Human).